Consider the following 341-residue polypeptide: Phosphate acyltransferase (341 aa).

This sequence belongs to the PlsX family. As to quaternary structure, homodimer. Probably interacts with PlsY.

The protein localises to the cytoplasm. It carries out the reaction a fatty acyl-[ACP] + phosphate = an acyl phosphate + holo-[ACP]. The protein operates within lipid metabolism; phospholipid metabolism. Its function is as follows. Catalyzes the reversible formation of acyl-phosphate (acyl-PO(4)) from acyl-[acyl-carrier-protein] (acyl-ACP). This enzyme utilizes acyl-ACP as fatty acyl donor, but not acyl-CoA. This Aliivibrio fischeri (strain ATCC 700601 / ES114) (Vibrio fischeri) protein is Phosphate acyltransferase.